A 185-amino-acid polypeptide reads, in one-letter code: Peptidyl-tRNA hydrolase (185 aa).

Tyr14 lines the tRNA pocket. His19 functions as the Proton acceptor in the catalytic mechanism. TRNA is bound by residues Tyr64, Asn66, and Asn112.

The protein belongs to the PTH family. As to quaternary structure, monomer.

Its subcellular location is the cytoplasm. The enzyme catalyses an N-acyl-L-alpha-aminoacyl-tRNA + H2O = an N-acyl-L-amino acid + a tRNA + H(+). Functionally, hydrolyzes ribosome-free peptidyl-tRNAs (with 1 or more amino acids incorporated), which drop off the ribosome during protein synthesis, or as a result of ribosome stalling. Its function is as follows. Catalyzes the release of premature peptidyl moieties from peptidyl-tRNA molecules trapped in stalled 50S ribosomal subunits, and thus maintains levels of free tRNAs and 50S ribosomes. The polypeptide is Peptidyl-tRNA hydrolase (Ligilactobacillus salivarius (strain UCC118) (Lactobacillus salivarius)).